The chain runs to 297 residues: Formamidopyrimidine-DNA glycosylase (297 aa).

Pro2 serves as the catalytic Schiff-base intermediate with DNA. Catalysis depends on Glu3, which acts as the Proton donor. Lys58 (proton donor; for beta-elimination activity) is an active-site residue. His104, Arg127, and Lys170 together coordinate DNA. The segment at 261–297 (NVYDREGEACRTPGCTGTVERMTQAGRSTFHCPQCQR) adopts an FPG-type zinc-finger fold. Residue Arg287 is the Proton donor; for delta-elimination activity of the active site.

This sequence belongs to the FPG family. Monomer. Requires Zn(2+) as cofactor.

It catalyses the reaction Hydrolysis of DNA containing ring-opened 7-methylguanine residues, releasing 2,6-diamino-4-hydroxy-5-(N-methyl)formamidopyrimidine.. It carries out the reaction 2'-deoxyribonucleotide-(2'-deoxyribose 5'-phosphate)-2'-deoxyribonucleotide-DNA = a 3'-end 2'-deoxyribonucleotide-(2,3-dehydro-2,3-deoxyribose 5'-phosphate)-DNA + a 5'-end 5'-phospho-2'-deoxyribonucleoside-DNA + H(+). Functionally, involved in base excision repair of DNA damaged by oxidation or by mutagenic agents. Acts as a DNA glycosylase that recognizes and removes damaged bases. Has a preference for oxidized purines, such as 7,8-dihydro-8-oxoguanine (8-oxoG). Has AP (apurinic/apyrimidinic) lyase activity and introduces nicks in the DNA strand. Cleaves the DNA backbone by beta-delta elimination to generate a single-strand break at the site of the removed base with both 3'- and 5'-phosphates. The chain is Formamidopyrimidine-DNA glycosylase from Allorhizobium ampelinum (strain ATCC BAA-846 / DSM 112012 / S4) (Agrobacterium vitis (strain S4)).